The chain runs to 177 residues: ATP synthase subunit delta (177 aa).

The protein belongs to the ATPase delta chain family. As to quaternary structure, F-type ATPases have 2 components, F(1) - the catalytic core - and F(0) - the membrane proton channel. F(1) has five subunits: alpha(3), beta(3), gamma(1), delta(1), epsilon(1). F(0) has three main subunits: a(1), b(2) and c(10-14). The alpha and beta chains form an alternating ring which encloses part of the gamma chain. F(1) is attached to F(0) by a central stalk formed by the gamma and epsilon chains, while a peripheral stalk is formed by the delta and b chains.

It is found in the cell inner membrane. F(1)F(0) ATP synthase produces ATP from ADP in the presence of a proton or sodium gradient. F-type ATPases consist of two structural domains, F(1) containing the extramembraneous catalytic core and F(0) containing the membrane proton channel, linked together by a central stalk and a peripheral stalk. During catalysis, ATP synthesis in the catalytic domain of F(1) is coupled via a rotary mechanism of the central stalk subunits to proton translocation. Its function is as follows. This protein is part of the stalk that links CF(0) to CF(1). It either transmits conformational changes from CF(0) to CF(1) or is implicated in proton conduction. The protein is ATP synthase subunit delta of Shewanella halifaxensis (strain HAW-EB4).